We begin with the raw amino-acid sequence, 182 residues long: uncharacterized protein (182 aa).

2 disordered regions span residues 1 to 73 and 105 to 182; these read MMSG…YRSL and SMST…HLNR. Composition is skewed to low complexity over residues 43–68 and 105–121; these read RPSPFLSPSSSSSQTSISPTPTETSS and SMSTLELSSSTLSSPVT. Residues 122–131 are compositionally biased toward pro residues; the sequence is APAPPPPPTS.

This is an uncharacterized protein from Caenorhabditis elegans.